The following is a 418-amino-acid chain: Histidine--tRNA ligase (418 aa).

This sequence belongs to the class-II aminoacyl-tRNA synthetase family. In terms of assembly, homodimer.

The protein resides in the cytoplasm. The enzyme catalyses tRNA(His) + L-histidine + ATP = L-histidyl-tRNA(His) + AMP + diphosphate + H(+). This is Histidine--tRNA ligase from Dehalococcoides mccartyi (strain ATCC BAA-2266 / KCTC 15142 / 195) (Dehalococcoides ethenogenes (strain 195)).